The primary structure comprises 101 residues: Small ribosomal subunit protein uS14 (101 aa).

Belongs to the universal ribosomal protein uS14 family. As to quaternary structure, part of the 30S ribosomal subunit. Contacts proteins S3 and S10.

Functionally, binds 16S rRNA, required for the assembly of 30S particles and may also be responsible for determining the conformation of the 16S rRNA at the A site. This chain is Small ribosomal subunit protein uS14, found in Brucella anthropi (strain ATCC 49188 / DSM 6882 / CCUG 24695 / JCM 21032 / LMG 3331 / NBRC 15819 / NCTC 12168 / Alc 37) (Ochrobactrum anthropi).